We begin with the raw amino-acid sequence, 354 residues long: UDP-3-O-acylglucosamine N-acyltransferase (354 aa).

H257 serves as the catalytic Proton acceptor.

The protein belongs to the transferase hexapeptide repeat family. LpxD subfamily. As to quaternary structure, homotrimer.

It catalyses the reaction a UDP-3-O-[(3R)-3-hydroxyacyl]-alpha-D-glucosamine + a (3R)-hydroxyacyl-[ACP] = a UDP-2-N,3-O-bis[(3R)-3-hydroxyacyl]-alpha-D-glucosamine + holo-[ACP] + H(+). Its pathway is bacterial outer membrane biogenesis; LPS lipid A biosynthesis. Its function is as follows. Catalyzes the N-acylation of UDP-3-O-acylglucosamine using 3-hydroxyacyl-ACP as the acyl donor. Is involved in the biosynthesis of lipid A, a phosphorylated glycolipid that anchors the lipopolysaccharide to the outer membrane of the cell. The protein is UDP-3-O-acylglucosamine N-acyltransferase of Rhizobium johnstonii (strain DSM 114642 / LMG 32736 / 3841) (Rhizobium leguminosarum bv. viciae).